The primary structure comprises 800 residues: Nuclear cap-binding protein subunit 1 (800 aa).

The segment at 1–26 (MSRRRAHDTEDEGYDHRRNKRRRVSE) is disordered. Threonine 9 bears the Phosphothreonine mark. Residues 31 to 243 (EDRLESLILR…CLWAQIRKLR (213 aa)) form the MIF4G domain. Residues 669-700 (LAKADSSSSDSEDDSSHKRKKPITHADKPSEE) are disordered.

This sequence belongs to the NCBP1 family. Component of the nuclear cap-binding complex (CBC), a heterodimer composed of Cbp80 and Cbp20 that interacts with m7GpppG-capped RNA.

The protein localises to the nucleus. Component of the cap-binding complex (CBC), which binds cotranscriptionally to the 5'-cap of pre-mRNAs and is involved in various processes such as pre-mRNA splicing and RNA-mediated gene silencing (RNAi). The CBC complex is involved in miRNA-mediated RNA interference via its interaction with Ars2 and is required for primary microRNAs (miRNAs) processing. Also involved in innate immunity via the short interfering RNAs (siRNAs) processing machinery by restricting the viral RNA production. In the CBC complex, Cbp80 does not bind directly capped RNAs (m7GpppG-capped RNA) but is required to stabilize the movement of the N-terminal loop of Cbp20 and lock the CBC into a high affinity cap-binding state with the cap structure. This Drosophila yakuba (Fruit fly) protein is Nuclear cap-binding protein subunit 1 (Cbp80).